The following is a 98-amino-acid chain: NADH-ubiquinone oxidoreductase chain 4L (98 aa).

The next 3 membrane-spanning stretches (helical) occupy residues 2–22, 29–49, and 61–81; these read PSISININLAFAAALLGMLMF, SLLCLEGMMLSMFTLSTLTIL, and ILLLVFAACEAAIGLALLVMV.

It belongs to the complex I subunit 4L family. As to quaternary structure, core subunit of respiratory chain NADH dehydrogenase (Complex I) which is composed of 45 different subunits.

The protein resides in the mitochondrion inner membrane. The catalysed reaction is a ubiquinone + NADH + 5 H(+)(in) = a ubiquinol + NAD(+) + 4 H(+)(out). Core subunit of the mitochondrial membrane respiratory chain NADH dehydrogenase (Complex I) which catalyzes electron transfer from NADH through the respiratory chain, using ubiquinone as an electron acceptor. Part of the enzyme membrane arm which is embedded in the lipid bilayer and involved in proton translocation. The protein is NADH-ubiquinone oxidoreductase chain 4L (MT-ND4L) of Microcebus mittermeieri (Mittermeier's mouse lemur).